A 448-amino-acid chain; its full sequence is Porin AaxA (448 aa).

The signal sequence occupies residues 1–24; the sequence is MASFRSSLLSALCAYGMMVMPAYA.

This sequence belongs to the OprB family.

The protein resides in the cell outer membrane. Facilitates L-arginine uptake, as part of the AaxABC system. The arginine uptake by the bacterium in the macrophage may be a virulence factor against the host innate immune response. The protein is Porin AaxA (aaxA) of Chlamydia abortus (strain DSM 27085 / S26/3) (Chlamydophila abortus).